Consider the following 257-residue polypeptide: 3-methyl-2-oxobutanoate hydroxymethyltransferase (257 aa).

Mg(2+) is bound by residues Asp-42 and Asp-86. Residues 42 to 43 (DS), Asp-86, and Lys-116 contribute to the 3-methyl-2-oxobutanoate site. Glu-118 provides a ligand contact to Mg(2+). Glu-185 (proton acceptor) is an active-site residue.

It belongs to the PanB family. As to quaternary structure, homodecamer; pentamer of dimers. Mg(2+) serves as cofactor.

Its subcellular location is the cytoplasm. It catalyses the reaction 3-methyl-2-oxobutanoate + (6R)-5,10-methylene-5,6,7,8-tetrahydrofolate + H2O = 2-dehydropantoate + (6S)-5,6,7,8-tetrahydrofolate. Its pathway is cofactor biosynthesis; (R)-pantothenate biosynthesis; (R)-pantoate from 3-methyl-2-oxobutanoate: step 1/2. Functionally, catalyzes the reversible reaction in which hydroxymethyl group from 5,10-methylenetetrahydrofolate is transferred onto alpha-ketoisovalerate to form ketopantoate. The sequence is that of 3-methyl-2-oxobutanoate hydroxymethyltransferase from Prochlorococcus marinus subsp. pastoris (strain CCMP1986 / NIES-2087 / MED4).